The sequence spans 245 residues: Ribosomal protein L11 methyltransferase (245 aa).

The S-adenosyl-L-methionine site is built by Thr101, Gly122, Asp144, and Asn184.

Belongs to the methyltransferase superfamily. PrmA family.

The protein resides in the cytoplasm. The enzyme catalyses L-lysyl-[protein] + 3 S-adenosyl-L-methionine = N(6),N(6),N(6)-trimethyl-L-lysyl-[protein] + 3 S-adenosyl-L-homocysteine + 3 H(+). In terms of biological role, methylates ribosomal protein L11. This chain is Ribosomal protein L11 methyltransferase, found in Aquifex aeolicus (strain VF5).